Reading from the N-terminus, the 156-residue chain is Large ribosomal subunit protein uL15 (156 aa).

The disordered stretch occupies residues 14 to 35 (GSRTHGWGRVGQHRKSGSSGGK).

Belongs to the universal ribosomal protein uL15 family. Part of the 50S ribosomal subunit.

In terms of biological role, binds to the 23S rRNA. The sequence is that of Large ribosomal subunit protein uL15 from Pyrobaculum islandicum (strain DSM 4184 / JCM 9189 / GEO3).